Here is a 779-residue protein sequence, read N- to C-terminus: Membrane metallo-endopeptidase-like 1 (779 aa).

The Cytoplasmic portion of the chain corresponds to 1–27 (MGKSEGPVGMVESAGRAGQKRPGFLEG). Residues 28 to 48 (GLLLLLLLVTAALVALGVLYA) traverse the membrane as a helical; Signal-anchor for type II membrane protein segment. Residues 49 to 779 (DRRGKQLPRL…MHPKERCRVW (731 aa)) are Lumenal-facing. The Peptidase M13 domain maps to 88 to 779 (VCTTPGCVIA…MHPKERCRVW (692 aa)). Cystine bridges form between Cys89-Cys94, Cys112-Cys764, Cys120-Cys724, Cys175-Cys439, and Cys650-Cys776. An a peptide-binding site is contributed by Arg135. Asn177, Asn207, Asn350, and Asn530 each carry an N-linked (GlcNAc...) asparagine glycan. The stretch at 515–560 (LEEMNRRLDEEYSNLNFSEDLYFENSLQNLKVGAQRSLRKLREKVD) forms a coiled coil. Zn(2+) is bound at residue His613. Residue Glu614 is part of the active site. A Zn(2+)-binding site is contributed by His617. N-linked (GlcNAc...) asparagine glycosylation is present at Asn657. Glu676 provides a ligand contact to Zn(2+). Asp680 functions as the Proton donor in the catalytic mechanism.

It belongs to the peptidase M13 family. The cofactor is Zn(2+). N-glycosylated. Predominantly expressed in testis. Weakly expressed in brain, kidney and heart.

The protein localises to the membrane. Its subcellular location is the secreted. The catalysed reaction is Preferential cleavage of polypeptides between hydrophobic residues, particularly with Phe or Tyr at P1'.. Inhibited by thiorphan and phosphoramidon. Metalloprotease involved in sperm function, possibly by modulating the processes of fertilization and early embryonic development. Degrades a broad variety of small peptides with a preference for peptides shorter than 3 kDa containing neutral bulky aliphatic or aromatic amino acid residues. Shares the same substrate specificity with MME and cleaves peptides at the same amide bond. The sequence is that of Membrane metallo-endopeptidase-like 1 (MMEL1) from Homo sapiens (Human).